The following is a 100-amino-acid chain: Small ribosomal subunit protein uS14c (100 aa).

The protein belongs to the universal ribosomal protein uS14 family. As to quaternary structure, part of the 30S ribosomal subunit.

Its subcellular location is the plastid. It is found in the chloroplast. In terms of biological role, binds 16S rRNA, required for the assembly of 30S particles. This Lobularia maritima (Sweet alyssum) protein is Small ribosomal subunit protein uS14c.